A 365-amino-acid polypeptide reads, in one-letter code: Beta-parvin (365 aa).

The span at 1-12 shows a compositional bias: pro residues; it reads MSSAPPRSPTPR. The interval 1–52 is disordered; sequence MSSAPPRSPTPRAPKMKKDESFLGKLGGTLARKKKTREVTDLQEEGKSAINS. Phosphoserine is present on Ser-8. Positions 37-47 are enriched in basic and acidic residues; sequence REVTDLQEEGK. Calponin-homology (CH) domains are found at residues 88 to 195 and 255 to 362; these read KELV…MHFR and NLVK…TKYK.

It belongs to the parvin family. In terms of assembly, interacts with ILK, ARHGEF6, PXN (via LD motifs), ACTN2 and actin. Interacts with DYSF. In terms of processing, phosphorylated by ILK. Expressed predominantly in heart and moderately in spleen, lung and skeletal muscle.

It localises to the cell junction. The protein localises to the focal adhesion. Its subcellular location is the cell membrane. The protein resides in the cytoplasm. It is found in the cytoskeleton. It localises to the cell projection. The protein localises to the lamellipodium. Its subcellular location is the myofibril. The protein resides in the sarcomere. It is found in the z line. Functionally, adapter protein that plays a role in integrin signaling via ILK and in activation of the GTPases CDC42 and RAC1 by guanine exchange factors, such as ARHGEF6. Is involved in the reorganization of the actin cytoskeleton and formation of lamellipodia. Plays a role in cell adhesion, cell spreading, establishment or maintenance of cell polarity, and cell migration. This chain is Beta-parvin (Parvb), found in Mus musculus (Mouse).